Reading from the N-terminus, the 242-residue chain is ATP-dependent dethiobiotin synthetase BioD (242 aa).

12–17 provides a ligand contact to ATP; it reads SVGKTI. Threonine 16 contacts Mg(2+). Lysine 37 is a catalytic residue. Residue aspartate 66 participates in ATP binding. Residues aspartate 66 and glutamate 124 each contribute to the Mg(2+) site. Residue 184–185 coordinates ATP; that stretch reads NR.

The protein belongs to the dethiobiotin synthetase family. In terms of assembly, homodimer. Mg(2+) is required as a cofactor.

The protein resides in the cytoplasm. The catalysed reaction is (7R,8S)-7,8-diammoniononanoate + CO2 + ATP = (4R,5S)-dethiobiotin + ADP + phosphate + 3 H(+). Its pathway is cofactor biosynthesis; biotin biosynthesis; biotin from 7,8-diaminononanoate: step 1/2. Its function is as follows. Catalyzes a mechanistically unusual reaction, the ATP-dependent insertion of CO2 between the N7 and N8 nitrogen atoms of 7,8-diaminopelargonic acid (DAPA, also called 7,8-diammoniononanoate) to form a ureido ring. This Mannheimia succiniciproducens (strain KCTC 0769BP / MBEL55E) protein is ATP-dependent dethiobiotin synthetase BioD.